The primary structure comprises 566 residues: Transcription factor P14E8.02 (566 aa).

The interval 1-32 (MNISSQNVLLPSPIPSSSPMASHKKSWLSKHP) is disordered. Position 73 is a phosphoserine (serine 73). The region spanning 86-137 (NKIGRSSQQCDHVLSTVDKAISRVHAIVTCTQDRMIIECVGWNGMIVSDKMR) is the FHA domain. 4 disordered regions span residues 191–217 (EENR…SQDY), 269–291 (DCSK…LLNG), 312–334 (ESDD…IEES), and 364–437 (FTNH…TKEN). The span at 314–330 (DDLDKNEEISEGEEYTP) shows a compositional bias: acidic residues. Composition is skewed to polar residues over residues 373–383 (NSNITTSNDSP) and 414–428 (DENT…PSSH). Serine 379 and serine 382 each carry phosphoserine.

Belongs to the PLM2/TOS4 family.

Its subcellular location is the nucleus. Its function is as follows. Probable transcriptional regulatory protein Required for G1/S progression. The chain is Transcription factor P14E8.02 from Schizosaccharomyces pombe (strain 972 / ATCC 24843) (Fission yeast).